The primary structure comprises 261 residues: Small ribosomal subunit protein eS1 (261 aa).

Over residues Met1–Lys18 the composition is skewed to basic residues. The disordered stretch occupies residues Met1–Ala20.

It belongs to the eukaryotic ribosomal protein eS1 family. As to quaternary structure, component of the small ribosomal subunit. Mature ribosomes consist of a small (40S) and a large (60S) subunit. The 40S subunit contains about 33 different proteins and 1 molecule of RNA (18S). The 60S subunit contains about 49 different proteins and 3 molecules of RNA (25S, 5.8S and 5S).

Its subcellular location is the cytoplasm. The polypeptide is Small ribosomal subunit protein eS1 (Catharanthus roseus (Madagascar periwinkle)).